Consider the following 47-residue polypeptide: Ribosome-inactivating protein luffin P1 (47 aa).

Cystine bridges form between cysteine 12–cysteine 33 and cysteine 16–cysteine 29.

Homotetramer.

The enzyme catalyses Endohydrolysis of the N-glycosidic bond at one specific adenosine on the 28S rRNA.. Inhibits protein synthesis in animal cells. In Luffa aegyptiaca (Sponge gourd), this protein is Ribosome-inactivating protein luffin P1.